The sequence spans 112 residues: Nitrogenase-stabilizing/protective protein NifW (112 aa).

Belongs to the NifW family. In terms of assembly, homotrimer; associates with NifD.

Its function is as follows. May protect the nitrogenase Fe-Mo protein from oxidative damage. The polypeptide is Nitrogenase-stabilizing/protective protein NifW (Burkholderia vietnamiensis (strain G4 / LMG 22486) (Burkholderia cepacia (strain R1808))).